Reading from the N-terminus, the 133-residue chain is MEFKELVDAAEKWCTGNPFDLIFAEDVDERRLDFYAEPGISFYVLCPDNLTGGTDNFHVWSESEDCLPFLQLAQDYISSCGKKTLLEVLDKVFRSFRPLLGLPDIDDDTFDQYHADVEEEPEPDHQQMGVSQQ.

The protein belongs to the MTURN family.

Its subcellular location is the cytoplasm. In terms of biological role, may be involved in early neuronal development. May play a role in promoting megakaryocyte differentiation. The chain is Maturin (mturn) from Danio rerio (Zebrafish).